Consider the following 1890-residue polypeptide: DNA polymerase zeta catalytic subunit (1890 aa).

2 stretches are compositionally biased toward polar residues: residues 508 to 533 (QENLPDFGSSTKRALPSNPDSQNLRT) and 549 to 560 (PDSSTSNGASEN). Disordered stretches follow at residues 508 to 565 (QENL…FRRY) and 922 to 942 (GDSNIDSEKQPLRDNHNDRGA). Residues 922 to 940 (GDSNIDSEKQPLRDNHNDR) show a composition bias toward basic and acidic residues. The Zn(2+) site is built by Cys1789, Cys1792, Cys1803, and Cys1806. The segment at 1789-1806 (CILCGEVVQESAQLCNRC) adopts a CysA-type zinc-finger fold. [4Fe-4S] cluster is bound by residues Cys1835, Cys1838, Cys1851, and Cys1856. The CysB motif motif lies at 1835-1856 (CRHCGGGDWVVQSGVKCNSLAC).

The protein belongs to the DNA polymerase type-B family. Forms DNA polymerase zeta with REV7. Requires [4Fe-4S] cluster as cofactor. As to expression, expressed in roots, leaves and flowers.

The protein localises to the nucleus. The enzyme catalyses DNA(n) + a 2'-deoxyribonucleoside 5'-triphosphate = DNA(n+1) + diphosphate. Functionally, catalytic subunit of the error prone DNA polymerase zeta. Involved in damage-tolerance mechanisms through translesion DNA synthesis. The sequence is that of DNA polymerase zeta catalytic subunit (REV3) from Arabidopsis thaliana (Mouse-ear cress).